Here is a 33-residue protein sequence, read N- to C-terminus: Photosystem II reaction center protein Psb30 (33 aa).

The chain crosses the membrane as a helical span at residues 5-25; it reads IVFQLTALLFVVAAGPLVIVL.

It belongs to the Psb30/Ycf12 family. In terms of assembly, PSII is composed of 1 copy each of membrane proteins PsbA, PsbB, PsbC, PsbD, PsbE, PsbF, PsbH, PsbI, PsbJ, PsbK, PsbL, PsbM, PsbT, PsbX, PsbY, PsbZ, Psb30/Ycf12, peripheral proteins of the oxygen-evolving complex and a large number of cofactors. It forms dimeric complexes.

The protein localises to the plastid. It localises to the chloroplast thylakoid membrane. A core subunit of photosystem II (PSII), probably helps stabilize the reaction center. This is Photosystem II reaction center protein Psb30 from Chlorella vulgaris (Green alga).